Reading from the N-terminus, the 133-residue chain is Exonuclease VapC9 (133 aa).

One can recognise a PINc domain in the interval 5–113; it reads YLVDASALYA…LVLVTQDREL (109 aa). Asp8, Asp92, and Asp110 together coordinate Mg(2+).

This sequence belongs to the PINc/VapC protein family. As to quaternary structure, homodimer, 2 of which then form a homotetramer. The cofactor is Mg(2+).

Inhibited by EDTA. In terms of biological role, toxic component of a type II toxin-antitoxin (TA) system. Its function is as follows. Has ribonuclease activity. Has a slow ssDNA exonuclease activity. This chain is Exonuclease VapC9, found in Pyrobaculum aerophilum (strain ATCC 51768 / DSM 7523 / JCM 9630 / CIP 104966 / NBRC 100827 / IM2).